A 144-amino-acid polypeptide reads, in one-letter code: Large ribosomal subunit protein uL16 (144 aa).

Residues 1–16 (MLQPKKTKFRRQQKGR) show a composition bias toward basic residues. Residues 1–22 (MLQPKKTKFRRQQKGRMKGEAQ) are disordered.

This sequence belongs to the universal ribosomal protein uL16 family. In terms of assembly, part of the 50S ribosomal subunit.

Its function is as follows. Binds 23S rRNA and is also seen to make contacts with the A and possibly P site tRNAs. This is Large ribosomal subunit protein uL16 from Parabacteroides distasonis (strain ATCC 8503 / DSM 20701 / CIP 104284 / JCM 5825 / NCTC 11152).